A 360-amino-acid chain; its full sequence is MQADMHGKLHAALEDGFFLFPFEQQQQPNIYYDTTTDQEDRPCFSFGSTISPRSWHFEKSDKIASSQLQNLVHTQPIHLINPQILFNEEFLNLENIDSQPISKETKTTKDCTMATGPERGKKSSESTRSSSLSSLFSNDESASTFHSSFNNHDNFQKSNRNGDDIDISDTIKYETNTNAQKDIKIFQENFEFNEFPYTQDFYPYTTNYTYSKPTNIHESINSKNTDSYSQYQDQFPPHTDNIHSFNNRHYSNHKSTNCNYYNNTSNNNNASDNVYEADPFIDEPQVPSYYYPLEIAFDVEKSPPPSLQKLNSKELEFLKKLNSKLSRYAAAYSFSSSNDQDYYDKVRFQEISYKFSKTYS.

Residues 102–135 are disordered; sequence SKETKTTKDCTMATGPERGKKSSESTRSSSLSSL. Over residues 126 to 135 the composition is skewed to low complexity; that stretch reads STRSSSLSSL.

As to quaternary structure, interacts with UME6.

It is found in the nucleus. Functionally, transcription factor required for sporulation and for early sporulation-specific genes expression. Positive regulator of SME1/IME2 expression. Directly activates expression of SLZ1 during meiosis. The sequence is that of Meiosis-inducing protein 1 (IME1) from Saccharomyces cerevisiae (strain ATCC 204508 / S288c) (Baker's yeast).